The primary structure comprises 133 residues: MAKEFGRPQRVAQEMQKEIAIILQREIKDPRLGMMTTVSGVEMSRDLAYAKVFVTFLNDKDEDAVKAGIKALQEASGFIRSLLGKAMRLRIVPELTFFYDNSLVEGMRMSNLVTNVVKHDEERRVNPDDNKED.

Belongs to the RbfA family. As to quaternary structure, monomer. Binds 30S ribosomal subunits, but not 50S ribosomal subunits or 70S ribosomes.

It localises to the cytoplasm. Functionally, one of several proteins that assist in the late maturation steps of the functional core of the 30S ribosomal subunit. Associates with free 30S ribosomal subunits (but not with 30S subunits that are part of 70S ribosomes or polysomes). Required for efficient processing of 16S rRNA. May interact with the 5'-terminal helix region of 16S rRNA. This chain is Ribosome-binding factor A, found in Salmonella schwarzengrund (strain CVM19633).